The sequence spans 267 residues: MNALLSNPFKRGLLRGETQIGLWLSSTSSYMAEIAATSGYDWLLIDGEHAPNTIQDLYHQLQAIAPYASQPVIRPVEGNRSLIKQVLDIGARTLLVPMVDTAEQAREVVSATRYPPIGSRGVGAGVARAARWGRVENYMAEANDELCLLIQVESRTALENLDAILEVDGIDGVFIGPADLSASLGYPDDAGHPDVQRVIEQSIRRIRAAGKAAGFLAVDPAMAEKCLAWGANFVAVGVDTMLYTQALDRRLAMFKSDSAQPQEKTSY.

His49 serves as the catalytic Proton acceptor. Substrate is bound at residue Gln151. Residue Glu153 participates in Mg(2+) binding. The substrate site is built by Ala178 and Asp179. Asp179 provides a ligand contact to Mg(2+).

It belongs to the HpcH/HpaI aldolase family. KDR aldolase subfamily. In terms of assembly, homohexamer. Mg(2+) serves as cofactor.

The enzyme catalyses 2-dehydro-3-deoxy-L-rhamnonate = (S)-lactaldehyde + pyruvate. In terms of biological role, catalyzes the reversible retro-aldol cleavage of 2-keto-3-deoxy-L-rhamnonate (KDR) to pyruvate and lactaldehyde. The protein is 2-keto-3-deoxy-L-rhamnonate aldolase of Klebsiella pneumoniae subsp. pneumoniae (strain ATCC 700721 / MGH 78578).